Reading from the N-terminus, the 352-residue chain is Protein pelota homolog (352 aa).

It belongs to the eukaryotic release factor 1 family. Pelota subfamily. Monomer. Requires a divalent metal cation as cofactor.

It localises to the cytoplasm. Functionally, may function in recognizing stalled ribosomes, interact with stem-loop structures in stalled mRNA molecules, and effect endonucleolytic cleavage of the mRNA. May play a role in the release non-functional ribosomes and degradation of damaged mRNAs. Has endoribonuclease activity. This is Protein pelota homolog from Thermofilum pendens (strain DSM 2475 / Hrk 5).